A 350-amino-acid chain; its full sequence is S-adenosylmethionine:tRNA ribosyltransferase-isomerase (350 aa).

This sequence belongs to the QueA family. Monomer.

It localises to the cytoplasm. It catalyses the reaction 7-aminomethyl-7-carbaguanosine(34) in tRNA + S-adenosyl-L-methionine = epoxyqueuosine(34) in tRNA + adenine + L-methionine + 2 H(+). Its pathway is tRNA modification; tRNA-queuosine biosynthesis. Its function is as follows. Transfers and isomerizes the ribose moiety from AdoMet to the 7-aminomethyl group of 7-deazaguanine (preQ1-tRNA) to give epoxyqueuosine (oQ-tRNA). In Vibrio vulnificus (strain CMCP6), this protein is S-adenosylmethionine:tRNA ribosyltransferase-isomerase.